The following is a 147-amino-acid chain: Large ribosomal subunit protein bL9 (147 aa).

The disordered stretch occupies residues 44–63 (VKTLDAQKRSEDKRKEQEKL). A compositionally biased stretch (basic and acidic residues) spans 48–63 (DAQKRSEDKRKEQEKL).

This sequence belongs to the bacterial ribosomal protein bL9 family.

In terms of biological role, binds to the 23S rRNA. The chain is Large ribosomal subunit protein bL9 from Brevibacillus brevis (strain 47 / JCM 6285 / NBRC 100599).